The chain runs to 834 residues: Periplasmic nitrate reductase (834 aa).

Residues 1-29 constitute a signal peptide (tat-type signal); sequence MNLTRREFAKANAAAIAAAAAGLPILVRA. Residues 41–97 form the 4Fe-4S Mo/W bis-MGD-type domain; that stretch reads LVWNKAPCRFCGTGCSVMVATRDGQVVATHGDIKAEVNRGINCVKGYFLSKIMYGSD. Residues cysteine 48, cysteine 51, cysteine 55, and cysteine 83 each contribute to the [4Fe-4S] cluster site. Mo-bis(molybdopterin guanine dinucleotide) contacts are provided by residues lysine 85, glutamine 152, asparagine 177, cysteine 181, 214–221, 245–249, 264–266, methionine 375, glutamine 379, asparagine 485, 511–512, lysine 534, aspartate 561, and 721–730; these read WGSNMAEM, STFEH, QTD, SD, and TGRVLEHWHT. Phenylalanine 797 provides a ligand contact to substrate. Asparagine 805 and lysine 822 together coordinate Mo-bis(molybdopterin guanine dinucleotide).

The protein belongs to the prokaryotic molybdopterin-containing oxidoreductase family. NasA/NapA/NarB subfamily. As to quaternary structure, component of the periplasmic nitrate reductase NapAB complex composed of NapA and NapB. The cofactor is [4Fe-4S] cluster. Mo-bis(molybdopterin guanine dinucleotide) is required as a cofactor. Predicted to be exported by the Tat system. The position of the signal peptide cleavage has not been experimentally proven.

It is found in the periplasm. The enzyme catalyses 2 Fe(II)-[cytochrome] + nitrate + 2 H(+) = 2 Fe(III)-[cytochrome] + nitrite + H2O. In terms of biological role, catalytic subunit of the periplasmic nitrate reductase complex NapAB. Receives electrons from NapB and catalyzes the reduction of nitrate to nitrite. This is Periplasmic nitrate reductase from Pseudomonas aeruginosa (strain LESB58).